The following is a 314-amino-acid chain: Secreted frizzled-related protein 1 (314 aa).

The signal sequence occupies residues 1–31; that stretch reads MGVGRSEGGRRGAALGVLLALGVALLAVGSA. The FZ domain occupies 53-169; that stretch reads TKPHQCVAIP…FPQDYVCIAM (117 aa). 5 disulfides stabilise this stretch: cysteine 58-cysteine 121, cysteine 68-cysteine 114, cysteine 105-cysteine 140, cysteine 129-cysteine 166, and cysteine 133-cysteine 157. A glycan (N-linked (GlcNAc...) asparagine) is linked at asparagine 173. Intrachain disulfides connect cysteine 186–cysteine 256, cysteine 189–cysteine 258, and cysteine 203–cysteine 306. An NTR domain is found at 186-306; that stretch reads CPPCDNEMKS…FMKKVKAPDC (121 aa).

The protein belongs to the secreted frizzled-related protein (sFRP) family.

The protein resides in the secreted. Its function is as follows. Soluble frizzled-related proteins (sFRPS) function as modulators of Wnt signaling through direct interaction with Wnts. They have a role in regulating cell growth and differentiation in specific cell types. The chain is Secreted frizzled-related protein 1 (SFRP1) from Gallus gallus (Chicken).